The sequence spans 452 residues: Phosphoglucosamine mutase (452 aa).

Catalysis depends on S104, which acts as the Phosphoserine intermediate. The Mg(2+) site is built by S104, D246, D248, and D250. S104 bears the Phosphoserine mark.

Belongs to the phosphohexose mutase family. Mg(2+) serves as cofactor. In terms of processing, activated by phosphorylation.

The catalysed reaction is alpha-D-glucosamine 1-phosphate = D-glucosamine 6-phosphate. Catalyzes the conversion of glucosamine-6-phosphate to glucosamine-1-phosphate. This is Phosphoglucosamine mutase from Streptomyces coelicolor (strain ATCC BAA-471 / A3(2) / M145).